We begin with the raw amino-acid sequence, 450 residues long: Salicylate synthase (450 aa).

Residue Glu252 is the Proton donor of the active site. A substrate-binding site is contributed by 270 to 271 (GT). Residue Glu297 coordinates Mg(2+). Substrate-binding positions include Tyr385, Arg405, and 419 to 421 (GAG). Positions 431 and 434 each coordinate Mg(2+). Lys438 is a substrate binding site.

This sequence belongs to the anthranilate synthase component I family. Salicylate synthase subfamily. Monomer. The cofactor is Mg(2+).

The catalysed reaction is chorismate = isochorismate. It catalyses the reaction isochorismate = salicylate + pyruvate. The enzyme catalyses chorismate = prephenate. Its pathway is siderophore biosynthesis; mycobactin biosynthesis. Functionally, involved in the incorporation of salicylate into the virulence-conferring salicylate-based siderophore mycobactin. Catalyzes the initial conversion of chorismate to yield the intermediate isochorismate (isochorismate synthase activity), and the subsequent elimination of the enolpyruvyl side chain in a lyase reaction to give salicylate (isochorismate pyruvate-lyase activity). In the absence of magnesium, MbtI displays a chorismate mutase activity and converts chorismate to prephenate. This Mycobacterium bovis (strain ATCC BAA-935 / AF2122/97) protein is Salicylate synthase (mbtI).